The sequence spans 332 residues: MNKIDFVVTWVDGGDPIWQAKKAKYSGAVDTSKNSMNSVKAYRDWGTFKYWFRGVEKFAPWVNKVYLVTDQQKPSWLDINSEKLVLVDHTEIICNDYLPVFSANPIESNIHRIPGLSEHFVFFNDDMYLTAPVEPTDFFSEDGLPKYNTALSPIIPERYGTGNFQVNDMEIVTSYFSRNEILKNGQFFDPKQGLKSIVKSLLYRNSQFICGFWESHLPYPLLRSTMNLVWEKEKAVLERTSASRFRNPSDTNVWLFKYWQIASGKYAIGNPKLGGLFSLDNAGPDFWKILNSGKYQIMCINDGFNIQDEEQVMTDFIKAMDQLLPDRSSFEI.

This sequence belongs to the stealth family.

This Streptococcus oralis protein is Receptor polysaccharide phosphotransferase WefC (wefC).